Reading from the N-terminus, the 396-residue chain is MAEVNVRNFNINFGPQHPAAHGVLRMVLELDGEVVERVDPHIGLLHRGTEKLMETKTYLQAGPYLDRLDYVAPMNQEHAFVLAIEKLLNIKVPKRGQLIRVLFSEIGRILNHLLNVTTQAMDVGALTPPLWGFEQRERLMIFYERACGARLHANYFRPGGVHQDLPESLVEDIGNFIDPFLVSLEKLDALVTPNRIFKQRNVDIGIVSIDEAWARSFSGVMIRGAGVPWDLRKSQPYECYDEMEFDIPIGKNSDCYDRYLIRMEEMRQSAKIMRQCVERLLGAEKNGPVSSLDRKIVPPKRSEMKSSMEALIHHFKLYTEGFHTPPGEVYVAVEAPKGEFGVYLVSDGTNKPYRVKLRAPGFAHLQAMDFLTRGHMLADATAILGSIDIVFGEVDR.

Belongs to the complex I 49 kDa subunit family. As to quaternary structure, NDH-1 is composed of 14 different subunits. Subunits NuoB, C, D, E, F, and G constitute the peripheral sector of the complex.

Its subcellular location is the cell inner membrane. The catalysed reaction is a quinone + NADH + 5 H(+)(in) = a quinol + NAD(+) + 4 H(+)(out). In terms of biological role, NDH-1 shuttles electrons from NADH, via FMN and iron-sulfur (Fe-S) centers, to quinones in the respiratory chain. The immediate electron acceptor for the enzyme in this species is believed to be ubiquinone. Couples the redox reaction to proton translocation (for every two electrons transferred, four hydrogen ions are translocated across the cytoplasmic membrane), and thus conserves the redox energy in a proton gradient. This chain is NADH-quinone oxidoreductase subunit D, found in Bartonella tribocorum (strain CIP 105476 / IBS 506).